The chain runs to 102 residues: Putative protein p7 (102 aa).

In Escherichia coli (Bacteriophage APSE-1), this protein is Putative protein p7 (7).